Here is a 238-residue protein sequence, read N- to C-terminus: uncharacterized protein (238 aa).

Transmembrane regions (helical) follow at residues Ile-24–Asn-44, Gly-78–Leu-98, Ile-109–Val-129, Phe-156–Ile-176, Met-188–Pro-208, and Ile-216–Leu-236.

This sequence belongs to the TatC family.

It is found in the plastid. It localises to the chloroplast membrane. This is an uncharacterized protein from Gracilaria tenuistipitata var. liui (Red alga).